Here is a 576-residue protein sequence, read N- to C-terminus: MELENIVANTVLLKAREGGGGNRKGKSKKWRQMLQFPHISQCEELRLSLERDYHSLCERQPIGRLLFREFCATRPELTRCTAFLDGVSEYEVTPDEKRKACGRRLMQNFLSHTGPDLIPEVPRQLVSNCAQRLEQGPCKDLFQELTRLTHEYLSTAPFADYLDSIYFNRFLQWKWLERQPVTKNTFRQYRVLGKGGFGEVCACQVRATGKMYACKKLEKKRIKKRKGEAMALNEKQILEKVNSRFVVSLAYAYETKDALCLVLTLMNGGDLKFHIYHMGQAGFPEARAVFYAAEICCGLEDLHRERIVYRDLKPENILLDDHGHIRISDLGLAVHVPEGQTIKGRVGTVGYMAPEVVRNERYTFSPDWWALGCLLYEMIAGQSPFQQRKKKIKREEVERLVKEVAEEYTDRFSSQARSLCSQLLSKDPAERLGCRGGGAREVKEHPLFKKLNFKRLGAGMLEPPFKPDPQAIYCKDVLDIEQFSTVKGVDLEPTDQDFYQKFATGSVSIPWQNEMVETECFQELNVFGLDGSVPPDLDWKGQPTAPPKKGLLQRLFSRQDCCGNCSDSEEELPTRL.

Residues 1–185 (MELENIVANT…LERQPVTKNT (185 aa)) are N-terminal. The RGS domain occupies 53 to 171 (YHSLCERQPI…LDSIYFNRFL (119 aa)). A Protein kinase domain is found at 186-448 (FRQYRVLGKG…AREVKEHPLF (263 aa)). ATP is bound by residues 192–200 (LGKGGFGEV), lysine 215, and 264–270 (TLMNGGD). The active-site Proton acceptor is aspartate 311. Position 315 to 318 (315 to 318 (ENIL)) interacts with ATP. One can recognise an AGC-kinase C-terminal domain in the interval 449 to 514 (KKLNFKRLGA…GSVSIPWQNE (66 aa)). Serine 484 carries the post-translational modification Phosphoserine. Threonine 485 bears the Phosphothreonine mark. S-palmitoyl cysteine attachment occurs at residues cysteine 561, cysteine 562, and cysteine 565. Phosphoserine is present on residues serine 566 and serine 568.

Belongs to the protein kinase superfamily. AGC Ser/Thr protein kinase family. GPRK subfamily. As to quaternary structure, interacts with GIT1. As to expression, expressed in the brain in striatal neurons.

It is found in the membrane. The enzyme catalyses [G-protein-coupled receptor] + ATP = [G-protein-coupled receptor]-phosphate + ADP + H(+). Functionally, specifically phosphorylates the activated forms of G protein-coupled receptors. Such receptor phosphorylation initiates beta-arrestin-mediated receptor desensitization, internalization, and signaling events leading to their desensitization. Seems to be involved in the desensitization of D2-like dopamine receptors in striatum and chemokine receptor CXCR4 which is critical for CXCL12-induced cell chemotaxis. Phosphorylates rhodopsin (RHO) (in vitro) and a non G-protein-coupled receptor, LRP6 during Wnt signaling (in vitro). This is G protein-coupled receptor kinase 6 (Grk6) from Mus musculus (Mouse).